Here is a 476-residue protein sequence, read N- to C-terminus: Glutamate--tRNA ligase 1 (476 aa).

The 'HIGH' region motif lies at 9 to 19 (PSPTGFLHIGG). The 'KMSKS' region signature appears at 238 to 242 (KLSKR). ATP is bound at residue Lys241.

It belongs to the class-I aminoacyl-tRNA synthetase family. Glutamate--tRNA ligase type 1 subfamily. In terms of assembly, monomer.

It localises to the cytoplasm. It catalyses the reaction tRNA(Glu) + L-glutamate + ATP = L-glutamyl-tRNA(Glu) + AMP + diphosphate. Catalyzes the attachment of glutamate to tRNA(Glu) in a two-step reaction: glutamate is first activated by ATP to form Glu-AMP and then transferred to the acceptor end of tRNA(Glu). The sequence is that of Glutamate--tRNA ligase 1 from Bartonella bacilliformis (strain ATCC 35685 / KC583 / Herrer 020/F12,63).